A 314-amino-acid polypeptide reads, in one-letter code: Methionyl-tRNA formyltransferase (314 aa).

113-116 contributes to the (6S)-5,6,7,8-tetrahydrofolate binding site; that stretch reads SLLP.

This sequence belongs to the Fmt family.

The catalysed reaction is L-methionyl-tRNA(fMet) + (6R)-10-formyltetrahydrofolate = N-formyl-L-methionyl-tRNA(fMet) + (6S)-5,6,7,8-tetrahydrofolate + H(+). Functionally, attaches a formyl group to the free amino group of methionyl-tRNA(fMet). The formyl group appears to play a dual role in the initiator identity of N-formylmethionyl-tRNA by promoting its recognition by IF2 and preventing the misappropriation of this tRNA by the elongation apparatus. The sequence is that of Methionyl-tRNA formyltransferase from Pseudomonas savastanoi pv. phaseolicola (strain 1448A / Race 6) (Pseudomonas syringae pv. phaseolicola (strain 1448A / Race 6)).